A 229-amino-acid polypeptide reads, in one-letter code: Flagellar L-ring protein (229 aa).

Residues 1–23 form the signal peptide; sequence MLSRLGARALVCLAGVAMLAASG. The N-palmitoyl cysteine moiety is linked to residue Cys-24. Cys-24 is lipidated: S-diacylglycerol cysteine.

This sequence belongs to the FlgH family. In terms of assembly, the basal body constitutes a major portion of the flagellar organelle and consists of four rings (L,P,S, and M) mounted on a central rod.

The protein localises to the cell outer membrane. It is found in the bacterial flagellum basal body. Functionally, assembles around the rod to form the L-ring and probably protects the motor/basal body from shearing forces during rotation. This Cupriavidus taiwanensis (strain DSM 17343 / BCRC 17206 / CCUG 44338 / CIP 107171 / LMG 19424 / R1) (Ralstonia taiwanensis (strain LMG 19424)) protein is Flagellar L-ring protein.